A 125-amino-acid chain; its full sequence is Class III hydrophobin G (125 aa).

The first 20 residues, 1–20 (MKPSIVTFLMLAAVTAAVSA), serve as a signal peptide directing secretion. 4 cysteine pairs are disulfide-bonded: Cys54–Cys107, Cys60–Cys101, Cys61–Cys94, and Cys108–Cys122.

The protein belongs to the fungal hydrophobin family. As to quaternary structure, self-assembles to form functional amyloid fibrils called rodlets. Self-assembly into fibrillar rodlets occurs spontaneously at hydrophobic:hydrophilic interfaces and the rodlets further associate laterally to form amphipathic monolayers.

It is found in the secreted. Its subcellular location is the cell wall. Functionally, aerial growth, conidiation, and dispersal of filamentous fungi in the environment rely upon a capability of their secreting small amphipathic proteins called hydrophobins (HPBs) with low sequence identity. Class I can self-assemble into an outermost layer of rodlet bundles on aerial cell surfaces, conferring cellular hydrophobicity that supports fungal growth, development and dispersal; whereas Class II form highly ordered films at water-air interfaces through intermolecular interactions but contribute nothing to the rodlet structure. RodF and rodG belong to Class III, which contains hydrophobins with intermediate (between classes I and II) or atypical characteristics. RodG, unlike rodA, is not required for rodlet formation. In Aspergillus fumigatus (strain ATCC MYA-4609 / CBS 101355 / FGSC A1100 / Af293) (Neosartorya fumigata), this protein is Class III hydrophobin G.